The following is a 257-amino-acid chain: Geranylgeranylglyceryl phosphate synthase (257 aa).

Residues aspartate 27 and threonine 57 each coordinate Mg(2+). Sn-glycerol 1-phosphate contacts are provided by residues 175–181 (YLEAGSG), 207–208 (GG), and 229–230 (GN).

The protein belongs to the GGGP/HepGP synthase family. Group II subfamily. It depends on Mg(2+) as a cofactor.

Its subcellular location is the cytoplasm. The enzyme catalyses sn-glycerol 1-phosphate + (2E,6E,10E)-geranylgeranyl diphosphate = sn-3-O-(geranylgeranyl)glycerol 1-phosphate + diphosphate. It functions in the pathway membrane lipid metabolism; glycerophospholipid metabolism. In terms of biological role, prenyltransferase that catalyzes the transfer of the geranylgeranyl moiety of geranylgeranyl diphosphate (GGPP) to the C3 hydroxyl of sn-glycerol-1-phosphate (G1P). This reaction is the first ether-bond-formation step in the biosynthesis of archaeal membrane lipids. The sequence is that of Geranylgeranylglyceryl phosphate synthase from Sulfolobus acidocaldarius (strain ATCC 33909 / DSM 639 / JCM 8929 / NBRC 15157 / NCIMB 11770).